The following is a 541-amino-acid chain: Beta-glucuronidase (541 aa).

An N-terminal signal peptide occupies residues 1–20; that stretch reads MHHHPITLLSLLLGAAQSIA. Residues N69, N115, and N157 are each glycosylated (N-linked (GlcNAc...) asparagine). The active-site Proton donor is E208. 3 N-linked (GlcNAc...) asparagine glycosylation sites follow: N217, N291, and N304. The Nucleophile role is filled by E324. 5 N-linked (GlcNAc...) asparagine glycosylation sites follow: N380, N426, N441, N483, and N512.

It belongs to the glycosyl hydrolase 79 family. In terms of processing, N-glycosylated.

It is found in the secreted. It carries out the reaction a beta-D-glucuronoside + H2O = D-glucuronate + an alcohol. Functionally, beta-glucuronidase that hydrolyzes beta-glucuronosyl and 4-O-methyl-beta-glucuronosyl residues of arabinogalactan-protein. Hydrolyzed heparan sulfate only very weakly. Has no activity on xylan from birchwood. Able to catalyze the transglycosylation of glucuronic acid (GlcA) residues from p-nitrophenyl-beta-glucuronic acid (PNP beta-GlcA) to various monosaccharide acceptors such as glucose, galactose and xylose. The sequence is that of Beta-glucuronidase from Aspergillus niger (strain ATCC MYA-4892 / CBS 513.88 / FGSC A1513).